The following is a 149-amino-acid chain: Calmodulin (149 aa).

The residue at position 2 (A2) is an N-acetylalanine. 4 consecutive EF-hand domains span residues 8–43 (EQVS…LGQN), 44–79 (PSES…KMKD), 81–116 (DSEE…IGEK), and 117–149 (LTDD…MMQK). Positions 21, 23, 25, 27, 32, 57, 59, 61, 63, 68, 94, 96, 98, 105, 130, 132, 134, 136, and 141 each coordinate Ca(2+).

Belongs to the calmodulin family.

Its function is as follows. Calmodulin mediates the control of a large number of enzymes, ion channels and other proteins by Ca(2+). Among the enzymes to be stimulated by the calmodulin-Ca(2+) complex are a number of protein kinases and phosphatases. The chain is Calmodulin from Colletotrichum gloeosporioides (Anthracnose fungus).